The sequence spans 801 residues: Transferrin receptor protein 2 (801 aa).

Residues 1 to 83 (MERLWGLFQR…WAAAGRRAAP (83 aa)) are Cytoplasmic-facing. The interval 16–45 (PRSSQTVYQRVEGPRKGHLEEEEEDGEEGA) is disordered. Residues 23–26 (YQRV) carry the Endocytosis signal motif. A compositionally biased stretch (acidic residues) spans 35 to 45 (EEEEEDGEEGA). Residues 84-104 (YLVLTALLIFTGAFLLGYVAF) form a helical; Signal-anchor for type II membrane protein membrane-spanning segment. Residues 105–801 (RGSCQACGDS…GDVWNIDNNF (697 aa)) lie on the Extracellular side of the membrane. N-linked (GlcNAc...) asparagine glycosylation is found at N240, N339, N540, and N754.

It belongs to the peptidase M28 family. M28B subfamily. Homodimer. Predominantly expressed in liver. While the alpha form is also expressed in spleen, lung, muscle, prostate and peripheral blood mononuclear cells, the beta form is expressed in all tissues tested, albeit weakly.

It is found in the cell membrane. The protein localises to the cytoplasm. Mediates cellular uptake of transferrin-bound iron in a non-iron dependent manner. May be involved in iron metabolism, hepatocyte function and erythrocyte differentiation. The sequence is that of Transferrin receptor protein 2 (TFR2) from Homo sapiens (Human).